The primary structure comprises 119 residues: Large ribosomal subunit protein uL22 (119 aa).

It belongs to the universal ribosomal protein uL22 family. Part of the 50S ribosomal subunit.

In terms of biological role, this protein binds specifically to 23S rRNA; its binding is stimulated by other ribosomal proteins, e.g. L4, L17, and L20. It is important during the early stages of 50S assembly. It makes multiple contacts with different domains of the 23S rRNA in the assembled 50S subunit and ribosome. Functionally, the globular domain of the protein is located near the polypeptide exit tunnel on the outside of the subunit, while an extended beta-hairpin is found that lines the wall of the exit tunnel in the center of the 70S ribosome. This chain is Large ribosomal subunit protein uL22, found in Rickettsia peacockii (strain Rustic).